We begin with the raw amino-acid sequence, 412 residues long: Protein png-1 (412 aa).

Zn(2+)-binding residues include C150, C153, C182, and C185. The disordered stretch occupies residues 363 to 412 (AAAARGGRSSPDNKSGANMMGSPATGDIKRPIPEDAPVPDVPSLWPTYGP).

It belongs to the transglutaminase-like superfamily. PNGase family.

In Neurospora crassa (strain ATCC 24698 / 74-OR23-1A / CBS 708.71 / DSM 1257 / FGSC 987), this protein is Protein png-1 (un-7).